The sequence spans 130 residues: Small ribosomal subunit protein uS9 (130 aa).

This sequence belongs to the universal ribosomal protein uS9 family.

The chain is Small ribosomal subunit protein uS9 from Halorhodospira halophila (strain DSM 244 / SL1) (Ectothiorhodospira halophila (strain DSM 244 / SL1)).